Here is a 116-residue protein sequence, read N- to C-terminus: Large ribosomal subunit protein bL20 (116 aa).

This sequence belongs to the bacterial ribosomal protein bL20 family.

In terms of biological role, binds directly to 23S ribosomal RNA and is necessary for the in vitro assembly process of the 50S ribosomal subunit. It is not involved in the protein synthesizing functions of that subunit. This Mycoplasmopsis pulmonis (strain UAB CTIP) (Mycoplasma pulmonis) protein is Large ribosomal subunit protein bL20.